The sequence spans 366 residues: ERCC4 domain-containing protein EP364R (366 aa).

An ERCC4 domain is found at 3–101 (FLVADHREHH…QLYFFVEGPA (99 aa)). 2 stretches are compositionally biased toward polar residues: residues 320–331 (RPTMQVATQPAA) and 349–366 (PTGH…TVRC). The segment at 320–366 (RPTMQVATQPAATQPLHKVSDDASSDASSPTGHQTLSKEMSLNTVRC) is disordered.

Belongs to the asfivirus EP364R family.

Plays a role in the inhibition of type I interferon signaling pathway. Mechanistically, specifically interacts with 2',3'-cGAMP and cleaves it via its phosphodiesterase activity. In turn, prevents 2',3'-cGAMP interaction with host ER-resident STING1 leading to inhibition of downstream signaling pathway and type I interferon production. This is ERCC4 domain-containing protein EP364R from Ornithodoros (relapsing fever ticks).